The sequence spans 189 residues: GTP cyclohydrolase 1 (189 aa).

Zn(2+)-binding residues include cysteine 76, histidine 79, and cysteine 149.

It belongs to the GTP cyclohydrolase I family. As to quaternary structure, toroid-shaped homodecamer, composed of two pentamers of five dimers.

It catalyses the reaction GTP + H2O = 7,8-dihydroneopterin 3'-triphosphate + formate + H(+). It functions in the pathway cofactor biosynthesis; 7,8-dihydroneopterin triphosphate biosynthesis; 7,8-dihydroneopterin triphosphate from GTP: step 1/1. This is GTP cyclohydrolase 1 from Dehalococcoides mccartyi (strain ATCC BAA-2266 / KCTC 15142 / 195) (Dehalococcoides ethenogenes (strain 195)).